We begin with the raw amino-acid sequence, 192 residues long: AGFAGDDAPRAVFPSIVGRPRDAYVGDEAQSKRGILTLKIAPEESPVLLTEAPLNPKTGIVLDTGDGVTHTVPIYEGYCLPHAILRLDLAGRDLTAYLTKGYSFTTTAEREIVRSYELPDGQVITIGNERCDIDIRKDLFANNVLSGGTTMYPGIADREITALAPPTIKIKIIAPPERKEEYDESGPGIVHR.

This sequence belongs to the actin family.

It localises to the cytoplasm. The protein resides in the cytoskeleton. The catalysed reaction is ATP + H2O = ADP + phosphate + H(+). In terms of biological role, actins are highly conserved proteins that are involved in various types of cell motility and are ubiquitously expressed in all eukaryotic cells. This is Actin, muscle from Chionoecetes opilio (Atlantic snow crab).